The sequence spans 464 residues: UDP-N-acetylmuramoylalanine--D-glutamate ligase (464 aa).

127 to 133 provides a ligand contact to ATP; sequence GSNGKST.

It belongs to the MurCDEF family.

The protein resides in the cytoplasm. The catalysed reaction is UDP-N-acetyl-alpha-D-muramoyl-L-alanine + D-glutamate + ATP = UDP-N-acetyl-alpha-D-muramoyl-L-alanyl-D-glutamate + ADP + phosphate + H(+). It participates in cell wall biogenesis; peptidoglycan biosynthesis. Functionally, cell wall formation. Catalyzes the addition of glutamate to the nucleotide precursor UDP-N-acetylmuramoyl-L-alanine (UMA). The polypeptide is UDP-N-acetylmuramoylalanine--D-glutamate ligase (Roseobacter denitrificans (strain ATCC 33942 / OCh 114) (Erythrobacter sp. (strain OCh 114))).